Consider the following 314-residue polypeptide: DNA-directed RNA polymerase subunit alpha (314 aa).

The interval 1 to 228 (MIEIEKPKIE…EHLNIFVGLT (228 aa)) is alpha N-terminal domain (alpha-NTD). The interval 245-314 (KEKVLEMTIE…ELGLGLRKDD (70 aa)) is alpha C-terminal domain (alpha-CTD).

This sequence belongs to the RNA polymerase alpha chain family. In terms of assembly, homodimer. The RNAP catalytic core consists of 2 alpha, 1 beta, 1 beta' and 1 omega subunit. When a sigma factor is associated with the core the holoenzyme is formed, which can initiate transcription.

It carries out the reaction RNA(n) + a ribonucleoside 5'-triphosphate = RNA(n+1) + diphosphate. DNA-dependent RNA polymerase catalyzes the transcription of DNA into RNA using the four ribonucleoside triphosphates as substrates. The protein is DNA-directed RNA polymerase subunit alpha of Bacillus thuringiensis (strain Al Hakam).